Consider the following 546-residue polypeptide: Chaperonin GroEL (546 aa).

Residues 29 to 32 (TMGP), lysine 50, 86 to 90 (DGTTT), glycine 414, and aspartate 492 contribute to the ATP site.

Belongs to the chaperonin (HSP60) family. As to quaternary structure, forms a cylinder of 14 subunits composed of two heptameric rings stacked back-to-back. Interacts with the co-chaperonin GroES.

It is found in the cytoplasm. It carries out the reaction ATP + H2O + a folded polypeptide = ADP + phosphate + an unfolded polypeptide.. Functionally, together with its co-chaperonin GroES, plays an essential role in assisting protein folding. The GroEL-GroES system forms a nano-cage that allows encapsulation of the non-native substrate proteins and provides a physical environment optimized to promote and accelerate protein folding. This is Chaperonin GroEL from Helicobacter pylori (strain P12).